Consider the following 448-residue polypeptide: Tumor necrosis factor receptor superfamily member EDAR (448 aa).

Residues 1-26 (MAHVGDCTQTPWLPVLVVSLMCSARA) form the signal peptide. The Extracellular portion of the chain corresponds to 27-187 (EYSNCGENEY…LSGQGHLATA (161 aa)). 3 TNFR-Cys repeats span residues 30–71 (NCGE…DYGC), 73–113 (PCPA…DAEC), and 115–148 (PCLP…TKEC). 6 cysteine pairs are disulfide-bonded: Cys-31/Cys-44, Cys-47/Cys-60, Cys-50/Cys-71, Cys-74/Cys-87, Cys-93/Cys-113, and Cys-135/Cys-148. Asn-38 is a glycosylation site (N-linked (GlcNAc...) asparagine). Residues 188-208 (LIIAMSTIFIMAIAIVLIIMF) traverse the membrane as a helical segment. Residues 209 to 448 (YILKTKPSAP…PPASQPHAAS (240 aa)) lie on the Cytoplasmic side of the membrane. Positions 220–297 (CCTSHPGKSV…EEPAPDKQGS (78 aa)) are disordered. Basic and acidic residues predominate over residues 233–243 (VSKDEEKKEAP). Over residues 271-283 (DASSENEQLLSRS) the composition is skewed to polar residues. The Death domain occupies 358 to 431 (RMLSSTYNSE…DAVESLCADI (74 aa)).

As to quaternary structure, binds to EDARADD. Associates with TRAF1, TRAF2, TRAF3 and NIK. Detected in fetal kidney, lung, skin and cultured neonatal epidermal keratinocytes. Not detected in lymphoblast and fibroblast cell lines.

The protein localises to the membrane. Receptor for EDA isoform A1, but not for EDA isoform A2. Mediates the activation of NF-kappa-B and JNK. May promote caspase-independent cell death. The chain is Tumor necrosis factor receptor superfamily member EDAR (EDAR) from Homo sapiens (Human).